A 773-amino-acid chain; its full sequence is Cytochrome c oxidase subunit 1+2 (773 aa).

The COX1 stretch occupies residues 1 to 491 (MKLLEIYDKQ…LIASYGSLIT (491 aa)). The helical transmembrane segment at 41 to 61 (TMYITFSIFAGIIGTLLSLVI) threads the bilayer. Position 64 (Glu-64) interacts with Ca(2+). His-85 is a Fe(II)-heme a binding site. 6 helical membrane-spanning segments follow: residues 87-111 (LIMI…NWFL), 130-150 (LWLI…GIGA), 173-193 (VGIL…INFL), 211-231 (LFVW…PVLA), 262-278 (LFHP…FGII), and 290-310 (IFGV…GFLV). His-264 serves as a coordination point for Cu cation. Positions 264-268 (HPEVY) form a cross-link, 1'-histidyl-3'-tyrosine (His-Tyr). An O2-binding site is contributed by Tyr-268. His-314 and His-315 together coordinate Cu cation. A run of 2 helical transmembrane segments spans residues 335 to 355 (IIAI…WGGV) and 362 to 382 (MLFV…GVVL). The Mg(2+) site is built by His-392 and Asp-393. 5 consecutive transmembrane segments (helical) span residues 396–416 (YVVA…IFAG), 444–464 (FWTM…LGLA), 483–503 (IASY…VNIF), 555–575 (IFFY…RILW), and 604–624 (GTVI…LIAI). His-400 contacts heme a3. Residue His-402 participates in Fe(II)-heme a binding. The segment at 492–773 (AFGLLFFFVN…VQEYLGRLYK (282 aa)) is COX2. His-709, Cys-744, Cys-748, and His-752 together coordinate Cu cation.

It in the N-terminal section; belongs to the heme-copper respiratory oxidase family. The protein in the C-terminal section; belongs to the cytochrome c oxidase subunit 2 family. In terms of assembly, component of the cytochrome c oxidase (complex IV, CIV), a multisubunit enzyme composed of a catalytic core of 3 subunits and several supernumerary subunits. The complex exists as a monomer or a dimer and forms supercomplexes (SCs) in the inner mitochondrial membrane with ubiquinol-cytochrome c oxidoreductase (cytochrome b-c1 complex, complex III, CIII). It depends on heme as a cofactor. Requires Cu cation as cofactor.

The protein localises to the mitochondrion inner membrane. The catalysed reaction is 4 Fe(II)-[cytochrome c] + O2 + 8 H(+)(in) = 4 Fe(III)-[cytochrome c] + 2 H2O + 4 H(+)(out). It participates in energy metabolism; oxidative phosphorylation. In terms of biological role, component of the cytochrome c oxidase, the last enzyme in the mitochondrial electron transport chain which drives oxidative phosphorylation. The respiratory chain contains 3 multisubunit complexes succinate dehydrogenase (complex II, CII), ubiquinol-cytochrome c oxidoreductase (cytochrome b-c1 complex, complex III, CIII) and cytochrome c oxidase (complex IV, CIV), that cooperate to transfer electrons derived from NADH and succinate to molecular oxygen, creating an electrochemical gradient over the inner membrane that drives transmembrane transport and the ATP synthase. Cytochrome c oxidase is the component of the respiratory chain that catalyzes the reduction of oxygen to water. Electrons originating from reduced cytochrome c in the intermembrane space (IMS) are transferred via the dinuclear copper A center (CU(A)) of subunit 2 and heme A of subunit 1 to the active site in subunit 1, a binuclear center (BNC) formed by heme A3 and copper B (CU(B)). The BNC reduces molecular oxygen to 2 water molecules using 4 electrons from cytochrome c in the IMS and 4 protons from the mitochondrial matrix. The chain is Cytochrome c oxidase subunit 1+2 (cox1/2) from Dictyostelium citrinum (Slime mold).